Consider the following 200-residue polypeptide: Probable molybdenum cofactor guanylyltransferase (200 aa).

GTP is bound by residues 8–10 (LAG), Lys-20, Asp-66, and Asp-97. Asp-97 serves as a coordination point for Mg(2+).

The protein belongs to the MobA family. Mg(2+) is required as a cofactor.

It is found in the cytoplasm. The enzyme catalyses Mo-molybdopterin + GTP + H(+) = Mo-molybdopterin guanine dinucleotide + diphosphate. Its function is as follows. Transfers a GMP moiety from GTP to Mo-molybdopterin (Mo-MPT) cofactor (Moco or molybdenum cofactor) to form Mo-molybdopterin guanine dinucleotide (Mo-MGD) cofactor. The chain is Probable molybdenum cofactor guanylyltransferase from Bacillus velezensis (strain DSM 23117 / BGSC 10A6 / LMG 26770 / FZB42) (Bacillus amyloliquefaciens subsp. plantarum).